The following is a 419-amino-acid chain: Indole prenyltransferase tdiB (419 aa).

Pro-58–Ser-59 is an L-tryptophan binding site. The substrate site is built by Arg-81, Lys-165, Tyr-167, Arg-236, Lys-238, Tyr-240, Tyr-330, and Tyr-394.

Belongs to the tryptophan dimethylallyltransferase family.

It carries out the reaction didemethylasterriquinone D + dimethylallyl diphosphate = asterriquinone C1 + diphosphate. It functions in the pathway secondary metabolite biosynthesis. Its function is as follows. Indole prenyltransferase; part of the gene cluster that mediates the biosynthesis of terrequinone A, an antitumor agent. The first step in the biosynthetic pathway for terrequinone A is formation of indole pyruvic acid (IPA) from L-tryptophan by the aminotransferase tdiD. The nonribosomal peptide synthase tdiA then immediately converts unstable IPA to didemethylasterriquinone D (DDAQ D), via condensation of 2 IPA molecules. The symmetric connectivity of the 2 IPA molecules is thought to arise by head-to-tail dual Claisen condensations facilitated by the TE domain. TdiB then catalyzes reverse prenylation by transferring dimethylallyl diphosphate to carbon atom 2' of DDAQ D, to yield asterriquinone C-1. Finally, tdiC and tdiE enzymes robustly convert asterriquinone C-1 to terrequinone A via a transformation involving regular prenylation at carbon atom 5, which requires elimination of the hydroxy group on C-5. The sequence is that of Indole prenyltransferase tdiB from Emericella nidulans (strain FGSC A4 / ATCC 38163 / CBS 112.46 / NRRL 194 / M139) (Aspergillus nidulans).